The sequence spans 318 residues: Aspartate carbamoyltransferase catalytic subunit (318 aa).

Carbamoyl phosphate is bound by residues R59 and T60. L-aspartate is bound at residue K87. Carbamoyl phosphate contacts are provided by R109, H137, and Q140. Positions 170 and 224 each coordinate L-aspartate. G265 and P266 together coordinate carbamoyl phosphate.

This sequence belongs to the aspartate/ornithine carbamoyltransferase superfamily. ATCase family. As to quaternary structure, heterododecamer (2C3:3R2) of six catalytic PyrB chains organized as two trimers (C3), and six regulatory PyrI chains organized as three dimers (R2).

The enzyme catalyses carbamoyl phosphate + L-aspartate = N-carbamoyl-L-aspartate + phosphate + H(+). It participates in pyrimidine metabolism; UMP biosynthesis via de novo pathway; (S)-dihydroorotate from bicarbonate: step 2/3. Catalyzes the condensation of carbamoyl phosphate and aspartate to form carbamoyl aspartate and inorganic phosphate, the committed step in the de novo pyrimidine nucleotide biosynthesis pathway. This Rhizobium rhizogenes (strain K84 / ATCC BAA-868) (Agrobacterium radiobacter) protein is Aspartate carbamoyltransferase catalytic subunit.